We begin with the raw amino-acid sequence, 89 residues long: Small ribosomal subunit protein uS15 (89 aa).

This sequence belongs to the universal ribosomal protein uS15 family. In terms of assembly, part of the 30S ribosomal subunit. Forms a bridge to the 50S subunit in the 70S ribosome, contacting the 23S rRNA.

Functionally, one of the primary rRNA binding proteins, it binds directly to 16S rRNA where it helps nucleate assembly of the platform of the 30S subunit by binding and bridging several RNA helices of the 16S rRNA. In terms of biological role, forms an intersubunit bridge (bridge B4) with the 23S rRNA of the 50S subunit in the ribosome. In Yersinia pseudotuberculosis serotype O:1b (strain IP 31758), this protein is Small ribosomal subunit protein uS15.